The sequence spans 1077 residues: Receptor-type guanylate cyclase daf-11 (1077 aa).

N14, N112, N149, and N311 each carry an N-linked (GlcNAc...) asparagine glycan. Residues 335–355 traverse the membrane as a helical segment; it reads TGVIIAIAVIMGVLLMFIIIL. The Protein kinase domain maps to 355–695; the sequence is LTTIRKCCNG…LARKIIDTVL (341 aa). Residues 356–1077 lie on the Cytoplasmic side of the membrane; sequence TTIRKCCNGS…DSQASTIPDN (722 aa). A Guanylate cyclase domain is found at 765 to 895; it reads TILYSDIVGF…EAVILASKME (131 aa). Positions 770, 771, and 814 each coordinate Mg(2+). Residues 983–1034 adopt a coiled-coil conformation; that stretch reads KDKMTLAKEKVIAERKNEEERLQRQQTLQEALEEHEEEIEMNEVLVDEDEGE. The segment at 1048 to 1077 is disordered; it reads TQMEELEDEPAGRTIGHGRLDSQASTIPDN.

This sequence belongs to the adenylyl cyclase class-4/guanylyl cyclase family. In terms of tissue distribution, expressed in sensory neurons including ASI, ASJ, ASK, AWB and AWC. Expressed in ASJ neurons in the dauer stage.

The protein localises to the cell membrane. It localises to the cell projection. The protein resides in the dendrite. Its subcellular location is the cilium. It is found in the perikaryon. It carries out the reaction GTP = 3',5'-cyclic GMP + diphosphate. Functionally, guanylate cyclase involved in the production of the second messenger cGMP. In addition, regulates cGMP levels by controlling the transcription of 3',5'-cyclic phosphodiesterase pde-1 and pde-5 mRNAs. Involved in the olfactory, light and pheromone sensing pathways. Part of the chemosensory mechanism of the ASJ sensory neuron that controls dauer formation and dauer recovery. Promotes the calcium flux in ASJ sensory neurons in response to onset and removal of a nitric oxide (NO) stimulus and is thereby required for the behavioral avoidance response to NO-producing organisms like P.aeruginosa. In ASI and ASJ sensory neurons, controls dauer formation and behavioral response to P.aeruginosa by up-regulating the transcription of daf-7, a member of the TGF-beta family. Required for the chemotaxis responses to non-volatile and volatile attractants mediated by the sensory neurons ASE and AWC respectively. Required in ASJ neurons for phototransduction downstream of G protein coupled-photoreceptor lite-1. Plays a role in the development of ASJ sensory neuron axons during late larval stages and in the maintenance of normal axon morphology in adults. Required to maintain the expression of putative olfactory receptor str-2 in one of the two AWC neurons in adults. Regulates, via the production of cGMP, lifespan (in some environmental conditions), sensitivity to oxidative stress and entry into quiescence triggered by satiety. In AWB and AWC sensory neurons, mediates the recognition of food odors which subsequently allows for the detection of preferred food sources. The protein is Receptor-type guanylate cyclase daf-11 of Caenorhabditis elegans.